Reading from the N-terminus, the 121-residue chain is NAD(P)H-quinone oxidoreductase subunit M (121 aa).

It belongs to the complex I NdhM subunit family. In terms of assembly, NDH-1 can be composed of about 15 different subunits; different subcomplexes with different compositions have been identified which probably have different functions.

Its subcellular location is the cellular thylakoid membrane. It carries out the reaction a plastoquinone + NADH + (n+1) H(+)(in) = a plastoquinol + NAD(+) + n H(+)(out). The enzyme catalyses a plastoquinone + NADPH + (n+1) H(+)(in) = a plastoquinol + NADP(+) + n H(+)(out). Its function is as follows. NDH-1 shuttles electrons from an unknown electron donor, via FMN and iron-sulfur (Fe-S) centers, to quinones in the respiratory and/or the photosynthetic chain. The immediate electron acceptor for the enzyme in this species is believed to be plastoquinone. Couples the redox reaction to proton translocation, and thus conserves the redox energy in a proton gradient. Cyanobacterial NDH-1 also plays a role in inorganic carbon-concentration. In Synechococcus sp. (strain JA-3-3Ab) (Cyanobacteria bacterium Yellowstone A-Prime), this protein is NAD(P)H-quinone oxidoreductase subunit M.